Reading from the N-terminus, the 328-residue chain is Ketol-acid reductoisomerase (NADP(+)) (328 aa).

One can recognise a KARI N-terminal Rossmann domain in the interval 2–181; the sequence is AKIYRETDAD…GFTRVGVIET (180 aa). NADP(+) contacts are provided by residues 25 to 28, Arg48, Ser52, and 82 to 85; these read YGIQ and DMVQ. Residue His107 is part of the active site. Gly133 serves as a coordination point for NADP(+). The KARI C-terminal knotted domain occupies 182 to 327; the sequence is TFAEETETDL…EDLRRLMRSG (146 aa). Residues Asp190, Glu194, Glu226, and Glu230 each contribute to the Mg(2+) site. Ser251 is a substrate binding site.

It belongs to the ketol-acid reductoisomerase family. It depends on Mg(2+) as a cofactor.

It carries out the reaction (2R)-2,3-dihydroxy-3-methylbutanoate + NADP(+) = (2S)-2-acetolactate + NADPH + H(+). The enzyme catalyses (2R,3R)-2,3-dihydroxy-3-methylpentanoate + NADP(+) = (S)-2-ethyl-2-hydroxy-3-oxobutanoate + NADPH + H(+). It functions in the pathway amino-acid biosynthesis; L-isoleucine biosynthesis; L-isoleucine from 2-oxobutanoate: step 2/4. Its pathway is amino-acid biosynthesis; L-valine biosynthesis; L-valine from pyruvate: step 2/4. Involved in the biosynthesis of branched-chain amino acids (BCAA). Catalyzes an alkyl-migration followed by a ketol-acid reduction of (S)-2-acetolactate (S2AL) to yield (R)-2,3-dihydroxy-isovalerate. In the isomerase reaction, S2AL is rearranged via a Mg-dependent methyl migration to produce 3-hydroxy-3-methyl-2-ketobutyrate (HMKB). In the reductase reaction, this 2-ketoacid undergoes a metal-dependent reduction by NADPH to yield (R)-2,3-dihydroxy-isovalerate. This Caldivirga maquilingensis (strain ATCC 700844 / DSM 13496 / JCM 10307 / IC-167) protein is Ketol-acid reductoisomerase (NADP(+)).